The primary structure comprises 256 residues: MFSNIIEIIILSIVQGISEFLPISSSAHLNIVEIIFEFNSNSLMIDVSLHLGSLLAIVFYFRRELLDLRNNQKLLSLLIIGSIPIVIAGYVISSTGLVNLLENNLKIIAWTTLIFGIILYLADKSKFDKKISSNLNFKTILYIGLFQILALIPGVSRAGITITAARLFRFNRFDSSKISFLLAIPAIAGASVLQLKNAIGQSFELNYLVLISITLSFLFSYFTVKFFLDYINKFSLNVFVIYRIIISIILFIIIYN.

The next 8 helical transmembrane spans lie at 5 to 25 (IIEIIILSIVQGISEFLPISS), 41 to 61 (NSLMIDVSLHLGSLLAIVFYF), 74 to 94 (LLSLLIIGSIPIVIAGYVISS), 100 to 120 (LLENNLKIIAWTTLIFGIILY), 135 to 155 (LNFKTILYIGLFQILALIPGV), 180 to 200 (FLLAIPAIAGASVLQLKNAIG), 208 to 228 (LVLISITLSFLFSYFTVKFFL), and 234 to 254 (FSLNVFVIYRIIISIILFIII).

It belongs to the UppP family.

It is found in the cell inner membrane. It catalyses the reaction di-trans,octa-cis-undecaprenyl diphosphate + H2O = di-trans,octa-cis-undecaprenyl phosphate + phosphate + H(+). In terms of biological role, catalyzes the dephosphorylation of undecaprenyl diphosphate (UPP). Confers resistance to bacitracin. In Pelagibacter ubique (strain HTCC1062), this protein is Undecaprenyl-diphosphatase.